Consider the following 719-residue polypeptide: Developmental regulator flbA (719 aa).

Positions 1–17 are enriched in polar residues; the sequence is MPTSISTAPLSQGSPPS. Disordered regions lie at residues 1 to 39, 117 to 141, and 155 to 190; these read MPTSISTAPLSQGSPPSSLIDYQPQSVPSSSSPPPSTAA, IGSTTNSSLRQSASSGSLQKHSRKA, and LSPPLSDGSGSSEQSSSAPFEPLSAVTEQPNPAAER. Composition is skewed to low complexity over residues 123–135 and 158–171; these read SSLRQSASSGSLQ and PLSDGSGSSEQSSS. Residues 214–411 form a fungal-DR region; it reads QTSSRLLRMT…QDGPNVKSSV (198 aa). A DEP domain is found at 425–511; sequence GLVGVKMARE…SKNAIYAITE (87 aa). Residues 540–685 enclose the RGS domain; the sequence is SNNARLNHIL…FLRDPKYSAI (146 aa). Residues 694–719 are disordered; the sequence is LIGGGRSYSPTPGNVPERSMSRSQRS.

Its function is as follows. Required for asexual sporulation and normal colony development. May be involved in brlA activation. Could play a regulatory role in controlling the flug-initiated signal transduction pathway that triggers the asexual reproduction. In Emericella nidulans (strain FGSC A4 / ATCC 38163 / CBS 112.46 / NRRL 194 / M139) (Aspergillus nidulans), this protein is Developmental regulator flbA (flbA).